A 337-amino-acid polypeptide reads, in one-letter code: Quinolinate synthase (337 aa).

His40 and Ser57 together coordinate iminosuccinate. Cys102 is a binding site for [4Fe-4S] cluster. Residues 128–130 and Ser145 contribute to the iminosuccinate site; that span reads YVN. Cys189 provides a ligand contact to [4Fe-4S] cluster. Residues 215-217 and Thr243 contribute to the iminosuccinate site; that span reads HPE. Position 288 (Cys288) interacts with [4Fe-4S] cluster.

Belongs to the quinolinate synthase family. Type 2 subfamily. [4Fe-4S] cluster is required as a cofactor.

It localises to the cytoplasm. The enzyme catalyses iminosuccinate + dihydroxyacetone phosphate = quinolinate + phosphate + 2 H2O + H(+). It functions in the pathway cofactor biosynthesis; NAD(+) biosynthesis; quinolinate from iminoaspartate: step 1/1. Catalyzes the condensation of iminoaspartate with dihydroxyacetone phosphate to form quinolinate. This Mycobacterium sp. (strain JLS) protein is Quinolinate synthase.